The following is a 520-amino-acid chain: GMP synthase [glutamine-hydrolyzing] (520 aa).

The region spanning 9–202 (TILIIDFGSQ…VHRIVGVKPG (194 aa)) is the Glutamine amidotransferase type-1 domain. The Nucleophile role is filled by Cys-86. Catalysis depends on residues His-176 and Glu-178. Residues 203 to 395 (WTMGAYREQA…LGLPDSFIGR (193 aa)) form the GMPS ATP-PPase domain. ATP is bound at residue 230-236 (SGGVDSS).

As to quaternary structure, homodimer.

The catalysed reaction is XMP + L-glutamine + ATP + H2O = GMP + L-glutamate + AMP + diphosphate + 2 H(+). The protein operates within purine metabolism; GMP biosynthesis; GMP from XMP (L-Gln route): step 1/1. Catalyzes the synthesis of GMP from XMP. This is GMP synthase [glutamine-hydrolyzing] from Brucella canis (strain ATCC 23365 / NCTC 10854 / RM-666).